We begin with the raw amino-acid sequence, 151 residues long: DNA-directed RNA polymerase RPB6 homolog (151 aa).

Residues 20-44 (ETEEENFVDSEEESEDKSEDKDEIV) are compositionally biased toward acidic residues. The tract at residues 20–46 (ETEEENFVDSEEESEDKSEDKDEIVES) is disordered.

The protein belongs to the archaeal RpoK/eukaryotic RPB6 RNA polymerase subunit family. As to quaternary structure, part of the viral DNA-directed RNA polymerase that consists of 8 polII-like subunits (RPB1, RPB2, RPB3, RPB5, RPB6, RPB7, RPB9, RPB10), a capping enzyme and a termination factor.

It is found in the host cytoplasm. It localises to the virion. Component of the DNA-directed RNA polymerase (RNAP) that catalyzes the transcription in the cytoplasm of viral DNA into RNA using the four ribonucleoside triphosphates as substrates. This chain is DNA-directed RNA polymerase RPB6 homolog, found in African swine fever virus (isolate Tick/Malawi/Lil 20-1/1983) (ASFV).